A 450-amino-acid chain; its full sequence is Salicylate synthase (450 aa).

Catalysis depends on glutamate 252, which acts as the Proton donor. 270–271 serves as a coordination point for substrate; it reads GT. Glutamate 297 lines the Mg(2+) pocket. Residues tyrosine 385, arginine 405, and 419-421 each bind substrate; that span reads GAG. Mg(2+)-binding residues include glutamate 431 and glutamate 434. Lysine 438 contacts substrate.

This sequence belongs to the anthranilate synthase component I family. Salicylate synthase subfamily. As to quaternary structure, monomer. The cofactor is Mg(2+).

The catalysed reaction is chorismate = isochorismate. It carries out the reaction isochorismate = salicylate + pyruvate. It catalyses the reaction chorismate = prephenate. Its pathway is siderophore biosynthesis; mycobactin biosynthesis. Its function is as follows. Involved in the incorporation of salicylate into the virulence-conferring salicylate-based siderophore mycobactin. Catalyzes the initial conversion of chorismate to yield the intermediate isochorismate (isochorismate synthase activity), and the subsequent elimination of the enolpyruvyl side chain in a lyase reaction to give salicylate (isochorismate pyruvate-lyase activity). In the absence of magnesium, MbtI displays a chorismate mutase activity and converts chorismate to prephenate. The sequence is that of Salicylate synthase (mbtI) from Mycolicibacterium paratuberculosis (strain ATCC BAA-968 / K-10) (Mycobacterium paratuberculosis).